The chain runs to 431 residues: Histidinol dehydrogenase (431 aa).

Residues Y130, Q191, and N214 each contribute to the NAD(+) site. Substrate-binding residues include S237, Q259, and H262. Positions 259 and 262 each coordinate Zn(2+). Catalysis depends on proton acceptor residues E327 and H328. The substrate site is built by H328, D361, E415, and H420. D361 serves as a coordination point for Zn(2+). H420 contacts Zn(2+).

Belongs to the histidinol dehydrogenase family. It depends on Zn(2+) as a cofactor.

The enzyme catalyses L-histidinol + 2 NAD(+) + H2O = L-histidine + 2 NADH + 3 H(+). Its pathway is amino-acid biosynthesis; L-histidine biosynthesis; L-histidine from 5-phospho-alpha-D-ribose 1-diphosphate: step 9/9. Catalyzes the sequential NAD-dependent oxidations of L-histidinol to L-histidinaldehyde and then to L-histidine. The protein is Histidinol dehydrogenase of Syntrophotalea carbinolica (strain DSM 2380 / NBRC 103641 / GraBd1) (Pelobacter carbinolicus).